Reading from the N-terminus, the 456-residue chain is UPF0496 protein 4 (456 aa).

The chain crosses the membrane as a helical span at residues 195–217 (VLMRALYGIESVTVFVCSIFVAV). The disordered stretch occupies residues 368–390 (QDSNVKQANGSSDESALVVPERT). Residues 371–381 (NVKQANGSSDE) show a composition bias toward polar residues.

The protein belongs to the ROH1 family.

The protein resides in the membrane. The chain is UPF0496 protein 4 from Oryza sativa subsp. japonica (Rice).